The chain runs to 407 residues: Extracellular superoxide dismutase [Cu-Zn] 3 (407 aa).

A signal peptide spans 1-19 (MRLLSVLVFLISVISIAKA). At 20 to 386 (DYQYAFCKFN…SESYNDNEPG (367 aa)) the chain is on the extracellular side. Residues N51, N205, and N224 are each glycosylated (N-linked (GlcNAc...) asparagine). 2 residues coordinate Cu cation: H245 and H247. N256 carries an N-linked (GlcNAc...) asparagine glycan. Residue H263 coordinates Cu cation. Residues H263, H271, H280, and D283 each coordinate Zn(2+). H320 provides a ligand contact to Cu cation. N321 and N364 each carry an N-linked (GlcNAc...) asparagine glycan. A helical membrane pass occupies residues 387–406 (SSSTVIPFFALIIFSIIFAL). Residue L407 is a topological domain, cytoplasmic.

Belongs to the Cu-Zn superoxide dismutase family. It depends on Cu cation as a cofactor. The cofactor is Zn(2+).

The protein localises to the cell membrane. It carries out the reaction 2 superoxide + 2 H(+) = H2O2 + O2. Functionally, protect the extracellular space from toxic effect of reactive oxygen intermediates by converting superoxyde radicals into hydrogen peroxyde and oxygen. The chain is Extracellular superoxide dismutase [Cu-Zn] 3 (sodC) from Dictyostelium discoideum (Social amoeba).